The primary structure comprises 264 residues: Probable metallo-hydrolase YflN (264 aa).

Zn(2+) contacts are provided by His-80, His-82, Asp-84, His-85, His-169, Asp-188, and His-241.

Belongs to the metallo-beta-lactamase superfamily. Zn(2+) is required as a cofactor.

The chain is Probable metallo-hydrolase YflN (yflN) from Bacillus subtilis (strain 168).